We begin with the raw amino-acid sequence, 376 residues long: T-box transcription factor 18 (376 aa).

Over residues 38–63 (STSRPSSSSPPSLPAVSSELLSSSFP) the composition is skewed to low complexity. Residues 38-76 (STSRPSSSSPPSLPAVSSELLSSSFPTNAPESSSRDLAP) form a disordered region. The segment at residues 171–364 (LANQEQWAKF…GNKYCRTDRK (194 aa)) is a DNA-binding region (T-box).

The protein resides in the nucleus. In terms of biological role, transcriptional regulator involved in developmental processes. Directly binds to the promoter region of the sex-determining factor xol-1 to activate its transcription. Its activation of xol-1 transcription controls sex determination and X chromosome dosage compensation to promote male development. Has a role in the fox-1-sex-1-mediated determination of sexual fate. This chain is T-box transcription factor 18, found in Caenorhabditis elegans.